Here is a 1196-residue protein sequence, read N- to C-terminus: Major DNA-binding protein (1196 aa).

Residues 499–512 (CNLCTFDTRHACVH) fold into a zinc finger. 2 short sequence motifs (required for filament formation) span residues 843–844 (FW) and 1142–1144 (FNF). The interval 1158–1196 (GGPGAPGPAFAGRKRAFHGDDPFGEGPPDKKGDLTLDML) is disordered. Residues 1170–1196 (RKRAFHGDDPFGEGPPDKKGDLTLDML) form a required for nuclear localization region. Basic and acidic residues predominate over residues 1174–1196 (FHGDDPFGEGPPDKKGDLTLDML).

The protein belongs to the herpesviridae major DNA-binding protein family. Homooligomers. Forms double-helical filaments necessary for the formation of replication compartments within the host nucleus. Interacts with the origin-binding protein. Interacts with the helicase primase complex; this interaction stimulates primer synthesis activity of the helicase-primase complex. Interacts with the DNA polymerase. Interacts with the alkaline exonuclease; this interaction increases its nuclease processivity.

Its subcellular location is the host nucleus. Functionally, plays several crucial roles in viral infection. Participates in the opening of the viral DNA origin to initiate replication by interacting with the origin-binding protein. May disrupt loops, hairpins and other secondary structures present on ssDNA to reduce and eliminate pausing of viral DNA polymerase at specific sites during elongation. Promotes viral DNA recombination by performing strand-transfer, characterized by the ability to transfer a DNA strand from a linear duplex to a complementary single-stranded DNA circle. Can also catalyze the renaturation of complementary single strands. Additionally, reorganizes the host cell nucleus, leading to the formation of prereplicative sites and replication compartments. This process is driven by the protein which can form double-helical filaments in the absence of DNA. The polypeptide is Major DNA-binding protein (Homo sapiens (Human)).